The chain runs to 548 residues: Probable thiamine biosynthetic bifunctional enzyme, chloroplastic (548 aa).

A compositionally biased stretch (polar residues) spans 1–10 (MAAAPQQSVH). The disordered stretch occupies residues 1–40 (MAAAPQQSVHPSLPSSTSTLRLLISSSPRRPPPPPPRARR). Residues 1–47 (MAAAPQQSVHPSLPSSTSTLRLLISSSPRRPPPPPPRARRYNRLAAS) constitute a chloroplast transit peptide. A compositionally biased stretch (low complexity) spans 11 to 28 (PSLPSSTSTLRLLISSSP). 4-amino-2-methyl-5-(diphosphooxymethyl)pyrimidine contacts are provided by residues 372–376 (QLREK) and N404. 2 residues coordinate Mg(2+): D405 and D424. S443 provides a ligand contact to 4-amino-2-methyl-5-(diphosphooxymethyl)pyrimidine. 469–471 (TST) provides a ligand contact to 2-[(2R,5Z)-2-carboxy-4-methylthiazol-5(2H)-ylidene]ethyl phosphate. K472 is a binding site for 4-amino-2-methyl-5-(diphosphooxymethyl)pyrimidine. 2-[(2R,5Z)-2-carboxy-4-methylthiazol-5(2H)-ylidene]ethyl phosphate is bound by residues G499 and 522 to 523 (VS).

The protein belongs to the thiamine-phosphate synthase family. Requires Mg(2+) as cofactor.

It localises to the plastid. The protein localises to the chloroplast. It catalyses the reaction 2-[(2R,5Z)-2-carboxy-4-methylthiazol-5(2H)-ylidene]ethyl phosphate + 4-amino-2-methyl-5-(diphosphooxymethyl)pyrimidine + 2 H(+) = thiamine phosphate + CO2 + diphosphate. The catalysed reaction is 2-(2-carboxy-4-methylthiazol-5-yl)ethyl phosphate + 4-amino-2-methyl-5-(diphosphooxymethyl)pyrimidine + 2 H(+) = thiamine phosphate + CO2 + diphosphate. The enzyme catalyses 4-methyl-5-(2-phosphooxyethyl)-thiazole + 4-amino-2-methyl-5-(diphosphooxymethyl)pyrimidine + H(+) = thiamine phosphate + diphosphate. It carries out the reaction 4-amino-5-hydroxymethyl-2-methylpyrimidine + ATP = 4-amino-2-methyl-5-(phosphooxymethyl)pyrimidine + ADP + H(+). It participates in cofactor biosynthesis; thiamine diphosphate biosynthesis; thiamine phosphate from 4-amino-2-methyl-5-diphosphomethylpyrimidine and 4-methyl-5-(2-phosphoethyl)-thiazole: step 1/1. The protein operates within cofactor biosynthesis; thiamine diphosphate biosynthesis; 4-amino-2-methyl-5-diphosphomethylpyrimidine from 5-amino-1-(5-phospho-D-ribosyl)imidazole: step 2/3. Functionally, essential for thiamine biosynthesis. Bifunctional enzyme that catalyzes the phosphorylation of hydroxymethylpyrimidine phosphate (HMP-P) to HMP-PP and condenses 4-methyl-5-(beta-hydroxyethyl)thiazole monophosphate (THZ-P) and 2-methyl-4-amino-5-hydroxymethyl pyrimidine pyrophosphate (HMP-PP) to form thiamine monophosphate (TMP). In Oryza sativa subsp. japonica (Rice), this protein is Probable thiamine biosynthetic bifunctional enzyme, chloroplastic.